Consider the following 237-residue polypeptide: tRNA (guanine-N(1)-)-methyltransferase (237 aa).

S-adenosyl-L-methionine contacts are provided by residues G115 and 134-139 (LGDFVL).

The protein belongs to the RNA methyltransferase TrmD family. Homodimer.

The protein localises to the cytoplasm. It carries out the reaction guanosine(37) in tRNA + S-adenosyl-L-methionine = N(1)-methylguanosine(37) in tRNA + S-adenosyl-L-homocysteine + H(+). Its function is as follows. Specifically methylates guanosine-37 in various tRNAs. This chain is tRNA (guanine-N(1)-)-methyltransferase, found in Synechococcus sp. (strain RCC307).